Here is a 901-residue protein sequence, read N- to C-terminus: Protein translocase subunit SecA (901 aa).

ATP-binding positions include glutamine 87, 105–109 (GEGKT), and aspartate 512. Positions 853 to 901 (QMQQLSHQTDENEAAEAIAAQTGDRKVGRNDPCPCGSGKKYKSCHGRLS) are disordered. Zn(2+) is bound by residues cysteine 885, cysteine 887, cysteine 896, and histidine 897. Residues 891–901 (KKYKSCHGRLS) show a composition bias toward basic residues.

This sequence belongs to the SecA family. Monomer and homodimer. Part of the essential Sec protein translocation apparatus which comprises SecA, SecYEG and auxiliary proteins SecDF-YajC and YidC. The cofactor is Zn(2+).

The protein localises to the cell inner membrane. It localises to the cytoplasm. It carries out the reaction ATP + H2O + cellular proteinSide 1 = ADP + phosphate + cellular proteinSide 2.. In terms of biological role, part of the Sec protein translocase complex. Interacts with the SecYEG preprotein conducting channel. Has a central role in coupling the hydrolysis of ATP to the transfer of proteins into and across the cell membrane, serving both as a receptor for the preprotein-SecB complex and as an ATP-driven molecular motor driving the stepwise translocation of polypeptide chains across the membrane. The sequence is that of Protein translocase subunit SecA from Enterobacter sp. (strain 638).